The chain runs to 706 residues: Heat shock protein 75 kDa, mitochondrial (706 aa).

The N-terminal 60 residues, 1 to 60 (MARELRALLLWGRGLQSALRAPALAGVRRGKPVLHLQKTTVHFRDPTQSLASGISAGQLY), are a transit peptide targeting the mitochondrion. 2 residues coordinate ATP: N121 and D160. Residue S172 is modified to Phosphoserine. N173 contacts ATP. Phosphothreonine is present on T176. Position 196 is a phosphoserine (S196). F207 provides a ligand contact to ATP. 3 positions are modified to N6-acetyllysine: K264, K326, and K334. R404 contacts ATP. N6-acetyllysine is present on residues K426, K433, and K468. T496 carries the post-translational modification Phosphothreonine. Phosphoserine is present on S570.

This sequence belongs to the heat shock protein 90 family. In terms of assembly, binds to the intracellular domain of tumor necrosis factor type 1 receptor. Binds to RB1. Interacts with SRC. Interacts with SDHA.

It is found in the mitochondrion. The protein resides in the mitochondrion inner membrane. It localises to the mitochondrion matrix. Chaperone that expresses an ATPase activity. Involved in maintaining mitochondrial function and polarization, downstream of PINK1 and mitochondrial complex I. Is a negative regulator of mitochondrial respiration able to modulate the balance between oxidative phosphorylation and aerobic glycolysis. The impact of TRAP1 on mitochondrial respiration is probably mediated by modulation of mitochondrial SRC and inhibition of SDHA. The protein is Heat shock protein 75 kDa, mitochondrial (Trap1) of Rattus norvegicus (Rat).